The chain runs to 489 residues: Male-specific lethal 1-like 1 (489 aa).

Disordered stretches follow at residues proline 126 to glycine 164 and valine 224 to glutamine 311. Residues leucine 179–aspartate 227 are a coiled coil. One can recognise a PEHE domain in the interval threonine 347–tryptophan 466. Residues glutamate 371 to glutamate 389 form an interaction with KAT8 HAT domain region. The short motif at lysine 380 to arginine 394 is the Bipartite nuclear localization signal element.

Belongs to the msl-1 family. In terms of assembly, component of a multisubunit histone acetyltransferase complex (MSL). Interacts (via PEHE domain) with KAT8 (via HAT domain) and MSL3 (via MRG domain); both interactions are direct.

It localises to the nucleus. Its subcellular location is the nucleoplasm. It is found in the nucleus speckle. Its function is as follows. Component of histone acetyltransferase complex. Within MSL complex, promotes ubiquitination of histone H2B. This Danio rerio (Zebrafish) protein is Male-specific lethal 1-like 1 (msl1l1).